Reading from the N-terminus, the 231-residue chain is 2,3,4,5-tetrahydropyridine-2,6-dicarboxylate N-acetyltransferase (231 aa).

This sequence belongs to the transferase hexapeptide repeat family. DapH subfamily.

It catalyses the reaction (S)-2,3,4,5-tetrahydrodipicolinate + acetyl-CoA + H2O = L-2-acetamido-6-oxoheptanedioate + CoA. Its pathway is amino-acid biosynthesis; L-lysine biosynthesis via DAP pathway; LL-2,6-diaminopimelate from (S)-tetrahydrodipicolinate (acetylase route): step 1/3. Catalyzes the transfer of an acetyl group from acetyl-CoA to tetrahydrodipicolinate. This chain is 2,3,4,5-tetrahydropyridine-2,6-dicarboxylate N-acetyltransferase, found in Thermosipho melanesiensis (strain DSM 12029 / CIP 104789 / BI429).